A 244-amino-acid chain; its full sequence is MRNDQREVNQLRNINITTNYISHPEGSVLIEMGNTKVICNASIEDRVPPFMRGQGKGWITAEYAMLPRATAQRNIRESSKGKVSGRTMEIQRLIGRALRSVVDLDQIGERTVWIDCDVIQADGGTRTASITGAFVAMSLAFAKLVEAKTLKKTPIQDYLAAISVGVLTNGTEILDLNYEEDSEAAVDMNIVMTGEGEFVEIQGTGEEATFTPNQLQNMLKLGEEGIQQLVKIQKELLADKLLID.

Residues arginine 86 and 124–126 each bind phosphate; that span reads GTR.

It belongs to the RNase PH family. In terms of assembly, homohexameric ring arranged as a trimer of dimers.

The enzyme catalyses tRNA(n+1) + phosphate = tRNA(n) + a ribonucleoside 5'-diphosphate. Functionally, phosphorolytic 3'-5' exoribonuclease that plays an important role in tRNA 3'-end maturation. Removes nucleotide residues following the 3'-CCA terminus of tRNAs; can also add nucleotides to the ends of RNA molecules by using nucleoside diphosphates as substrates, but this may not be physiologically important. Probably plays a role in initiation of 16S rRNA degradation (leading to ribosome degradation) during starvation. In Oceanobacillus iheyensis (strain DSM 14371 / CIP 107618 / JCM 11309 / KCTC 3954 / HTE831), this protein is Ribonuclease PH.